Consider the following 926-residue polypeptide: Eukaryotic translation initiation factor 3 subunit C (926 aa).

Disordered stretches follow at residues 1 to 27 (MSRFFATGSDSESEESSSADEITPKAA), 157 to 251 (ASYK…NDGT), and 266 to 300 (EKASDRKKDDRRRRHKKKERIEEEAEEEGEAEEGG). Residues 200–210 (KPQEEEKKAPE) are compositionally biased toward basic and acidic residues. Over residues 220–235 (DEESESDDDEDSEDWA) the composition is skewed to acidic residues. Residues 274–283 (DDRRRRHKKK) show a composition bias toward basic residues. Acidic residues predominate over residues 287-299 (EEEAEEEGEAEEG). A PCI domain is found at 672 to 848 (FHMHINLELL…QTVVMHRTEP (177 aa)). Positions 890–919 (GGYQQKQGYQRGDQKGGYQQKQNYQRGGYR) are enriched in low complexity. The tract at residues 890-926 (GGYQQKQGYQRGDQKGGYQQKQNYQRGGYRNQNQSSY) is disordered.

Belongs to the eIF-3 subunit C family. Component of the eukaryotic translation initiation factor 3 (eIF-3) complex, which is composed of 13 subunits: eif3a, eif3b, eif3c, eif3d, eif3e, eif3f, eif3g, eif3h, eif3i, eif3j, eif3k, eif3l and eif3m.

It is found in the cytoplasm. Functionally, component of the eukaryotic translation initiation factor 3 (eIF-3) complex, which is involved in protein synthesis of a specialized repertoire of mRNAs and, together with other initiation factors, stimulates binding of mRNA and methionyl-tRNAi to the 40S ribosome. The eIF-3 complex specifically targets and initiates translation of a subset of mRNAs involved in cell proliferation. The sequence is that of Eukaryotic translation initiation factor 3 subunit C (eif3c) from Danio rerio (Zebrafish).